The primary structure comprises 148 residues: MKLILTQEVPGLGSPGDIVEVANGYGRNYLVPRKYAILATKGAERQVEQIKRARSARAVRDLGHAQEIAGQLGGLKVELISRAGKEGRLFGSVTAADVVEAVTAAGGPELDRRRVELTTPIKSLGAYTVAVHLHPEVTASVKLQVKKA.

Belongs to the bacterial ribosomal protein bL9 family.

Its function is as follows. Binds to the 23S rRNA. This Frankia alni (strain DSM 45986 / CECT 9034 / ACN14a) protein is Large ribosomal subunit protein bL9.